Reading from the N-terminus, the 723-residue chain is Nucleolar protein 11 (723 aa).

Its subcellular location is the nucleus. The protein resides in the nucleolus. In terms of biological role, ribosome biogenesis factor. May be required for both optimal rDNA transcription and pre-rRNA processing. The protein is Nucleolar protein 11 (NOL11) of Gallus gallus (Chicken).